The primary structure comprises 236 residues: tRNA (guanine-N(1)-)-methyltransferase (236 aa).

Residues Gly113 and 133-138 (IGDYVL) contribute to the S-adenosyl-L-methionine site.

This sequence belongs to the RNA methyltransferase TrmD family. Homodimer.

The protein localises to the cytoplasm. The enzyme catalyses guanosine(37) in tRNA + S-adenosyl-L-methionine = N(1)-methylguanosine(37) in tRNA + S-adenosyl-L-homocysteine + H(+). Functionally, specifically methylates guanosine-37 in various tRNAs. This chain is tRNA (guanine-N(1)-)-methyltransferase, found in Lachnospira eligens (strain ATCC 27750 / DSM 3376 / VPI C15-48 / C15-B4) (Eubacterium eligens).